The chain runs to 983 residues: Seizure protein 6 homolog (983 aa).

A signal peptide spans 1-19; that stretch reads MRPAALLLLPSLLALLVHG. Disordered stretches follow at residues 80 to 132 and 148 to 194; these read GQEK…WSLE and PGMA…QTTG. Over residues 101 to 112 the composition is skewed to polar residues; the sequence is NQDSRPVFTSPT. The span at 154-167 shows a compositional bias: pro residues; the sequence is TPGPGERPNTPPPS. The N-linked (GlcNAc...) asparagine glycan is linked to Asn-278. The region spanning 344 to 403 is the Sushi 1 domain; the sequence is LSCHFPRRPAYGAVTVTSLHPGGSARFRCATGYQLKGARLLTCLNATQPFWDSQEPVCIA. Cystine bridges form between Cys-346–Cys-386, Cys-372–Cys-401, Cys-405–Cys-432, Cys-521–Cys-563, Cys-548–Cys-578, Cys-582–Cys-608, Cys-699–Cys-741, Cys-727–Cys-754, Cys-760–Cys-802, Cys-788–Cys-819, Cys-827–Cys-869, and Cys-855–Cys-884. 3 N-linked (GlcNAc...) asparagine glycosylation sites follow: Asn-388, Asn-425, and Asn-530. In terms of domain architecture, CUB 1 spans 405–516; the sequence is CGGVIRNATT…AGMALRYEAF (112 aa). The region spanning 519-580 is the Sushi 2 domain; the sequence is GHCYEPFVKY…WNETEPACRA (62 aa). The CUB 2 domain maps to 582–693; that stretch reads CSGETTDSAG…QGFVIHFFEV (112 aa). Sushi domains are found at residues 697-756, 758-821, and 825-886; these read DTCP…SCQR, TSCL…KCLL, and KPCH…ICRA. The chain crosses the membrane as a helical span at residues 915–935; that stretch reads LAAAIFLPLVAMALLVGGVYL.

Belongs to the SEZ6 family.

The protein localises to the cell membrane. In terms of biological role, may play a role in cell-cell recognition and in neuronal membrane signaling. Seems to be important for the achievement of the necessary balance between dendrite elongation and branching during the elaboration of a complex dendritic arbor. Involved in the development of appropriate excitatory synaptic connectivity. The polypeptide is Seizure protein 6 homolog (SEZ6) (Bos taurus (Bovine)).